Here is a 514-residue protein sequence, read N- to C-terminus: ATP synthase subunit alpha (514 aa).

Residue 170 to 177 (GDRQIGKT) participates in ATP binding.

It belongs to the ATPase alpha/beta chains family. F-type ATPases have 2 components, CF(1) - the catalytic core - and CF(0) - the membrane proton channel. CF(1) has five subunits: alpha(3), beta(3), gamma(1), delta(1), epsilon(1). CF(0) has three main subunits: a(1), b(2) and c(9-12). The alpha and beta chains form an alternating ring which encloses part of the gamma chain. CF(1) is attached to CF(0) by a central stalk formed by the gamma and epsilon chains, while a peripheral stalk is formed by the delta and b chains.

It localises to the cell inner membrane. The catalysed reaction is ATP + H2O + 4 H(+)(in) = ADP + phosphate + 5 H(+)(out). In terms of biological role, produces ATP from ADP in the presence of a proton gradient across the membrane. The alpha chain is a regulatory subunit. The protein is ATP synthase subunit alpha of Pseudomonas putida (strain GB-1).